The following is a 172-amino-acid chain: Stellate protein CG33237 (172 aa).

Belongs to the casein kinase 2 subunit beta family. In terms of assembly, interacts in vitro with the casein kinase 2 alpha subunit (CkII-alpha). The relevance of such interaction is however unclear in vivo. In terms of tissue distribution, probably not expressed in wild-type flies. In males lacking the Y chromosome, it is testis-specific and constitutes the main component of star-shaped crystals.

Its function is as follows. Unknown. In males lacking the Y chromosome, its strong overexpression leads to the appearance of proteinaceous star-shaped crystals in the primary spermatocytes causing meiotic drive, possibly by interfering with normal casein kinase 2 activity. The sequence is that of Stellate protein CG33237 (Ste:CG33237) from Drosophila melanogaster (Fruit fly).